The sequence spans 493 residues: Cytochrome P450 2E1 (493 aa).

298–303 (FAGTET) serves as a coordination point for substrate. Cys437 serves as a coordination point for heme.

Belongs to the cytochrome P450 family. In terms of assembly, interacts with chaperones HSP70 and HSP90; this interaction is required for initial targeting to mitochondria. Heme serves as cofactor.

It is found in the endoplasmic reticulum membrane. The protein resides in the microsome membrane. The protein localises to the mitochondrion inner membrane. The enzyme catalyses an organic molecule + reduced [NADPH--hemoprotein reductase] + O2 = an alcohol + oxidized [NADPH--hemoprotein reductase] + H2O + H(+). It catalyses the reaction (5Z,8Z,11Z)-eicosatrienoate + reduced [NADPH--hemoprotein reductase] + O2 = 19-hydroxy-(5Z,8Z,11Z)-eicosatrienoate + oxidized [NADPH--hemoprotein reductase] + H2O + H(+). It carries out the reaction (5Z,8Z,11Z,14Z,17Z)-eicosapentaenoate + reduced [NADPH--hemoprotein reductase] + O2 = 19-hydroxy-(5Z,8Z,11Z,14Z,17Z)-eicosapentaenoate + oxidized [NADPH--hemoprotein reductase] + H2O + H(+). The catalysed reaction is (4Z,7Z,10Z,13Z,16Z,19Z)-docosahexaenoate + reduced [NADPH--hemoprotein reductase] + O2 = 21-hydroxy-(4Z,7Z,10Z,13Z,16Z,19Z)-docosahexaenoate + oxidized [NADPH--hemoprotein reductase] + H2O + H(+). The enzyme catalyses dodecanoate + reduced [NADPH--hemoprotein reductase] + O2 = 11-hydroxydodecanoate + oxidized [NADPH--hemoprotein reductase] + H2O + H(+). It catalyses the reaction tetradecanoate + reduced [NADPH--hemoprotein reductase] + O2 = 13-hydroxytetradecanoate + oxidized [NADPH--hemoprotein reductase] + H2O + H(+). It carries out the reaction 4-nitrophenol + NADPH + O2 + H(+) = 4-nitrocatechol + NADP(+) + H2O. The protein operates within lipid metabolism; fatty acid metabolism. Its activity is regulated as follows. The omega-1 hydroxylase activity is stimulated by cytochrome b5. In terms of biological role, a cytochrome P450 monooxygenase involved in the metabolism of fatty acids. Mechanistically, uses molecular oxygen inserting one oxygen atom into a substrate, and reducing the second into a water molecule, with two electrons provided by NADPH via cytochrome P450 reductase (NADPH--hemoprotein reductase). Catalyzes the hydroxylation of carbon-hydrogen bonds. Hydroxylates fatty acids specifically at the omega-1 position displaying the highest catalytic activity for saturated fatty acids. May be involved in the oxidative metabolism of xenobiotics. This is Cytochrome P450 2E1 from Rattus norvegicus (Rat).